We begin with the raw amino-acid sequence, 719 residues long: Pesticidal crystal protein Cry1Ic (719 aa).

This sequence belongs to the delta endotoxin family.

Its function is as follows. Promotes colloidosmotic lysis by binding to the midgut epithelial cells of insects. This chain is Pesticidal crystal protein Cry1Ic (cry1Ic), found in Bacillus thuringiensis.